The chain runs to 493 residues: Protein LTV1 homolog (493 aa).

3 disordered regions span residues 42-63, 97-119, and 170-207; these read AAARQQKPKDPEPPTDPAQRQE, PNQARKQKVQDSEKPGPAPKLML, and IQAMAEGDSDDEEWDDEDGEEQSDMDFDSDDLNEDENE. The span at 176–207 shows a compositional bias: acidic residues; sequence GDSDDEEWDDEDGEEQSDMDFDSDDLNEDENE. A phosphoserine mark is found at S345, S369, S370, S424, and S427. Residues 359 to 387 are disordered; that stretch reads VIDEPRRSRRSSASTNPAPIQIDPKTGLP. A coiled-coil region spans residues 437 to 468; the sequence is KDETHEEKKERKRLLKDYRNERRIEKKANTEA. The segment covering 465–474 has biased composition (basic and acidic residues); sequence NTEAFKEEKK. The interval 465–493 is disordered; it reads NTEAFKEEKKRQTHVKINQRTNQQGASIV. Residues 479-493 are compositionally biased toward polar residues; that stretch reads VKINQRTNQQGASIV.

This sequence belongs to the LTV1 family. Interacts with RpS3; the interaction is RNA-independent. Associates with free 40S ribosome subunits.

It localises to the cytoplasm. In terms of biological role, necessary for the biogenesis of 40S ribosome subunits by regulating pre-rRNA processing. Non-ribosomal factor required for efficient nuclear export of the ribosomal 40S subunit. Necessary for endoreplication driven by Myc. The protein is Protein LTV1 homolog of Drosophila melanogaster (Fruit fly).